The following is a 208-amino-acid chain: Uracil phosphoribosyltransferase (208 aa).

5-phospho-alpha-D-ribose 1-diphosphate-binding positions include R78, R103, and 130–138 (DPMFATGGT). Uracil-binding positions include I193 and 198–200 (GDA). D199 is a 5-phospho-alpha-D-ribose 1-diphosphate binding site.

It belongs to the UPRTase family. The cofactor is Mg(2+).

The enzyme catalyses UMP + diphosphate = 5-phospho-alpha-D-ribose 1-diphosphate + uracil. Its pathway is pyrimidine metabolism; UMP biosynthesis via salvage pathway; UMP from uracil: step 1/1. Allosterically activated by GTP. Its function is as follows. Catalyzes the conversion of uracil and 5-phospho-alpha-D-ribose 1-diphosphate (PRPP) to UMP and diphosphate. This is Uracil phosphoribosyltransferase from Campylobacter jejuni subsp. jejuni serotype O:2 (strain ATCC 700819 / NCTC 11168).